Consider the following 369-residue polypeptide: Molybdenum import ATP-binding protein ModC (369 aa).

An ABC transporter domain is found at 7–243 (PGQAGIHARF…LDLPMAMTDD (237 aa)). 41–48 (GQSGSGKT) lines the ATP pocket. Residues 304–369 (EGSILNVLAV…AQIKAVSLLA (66 aa)) enclose the Mop domain.

This sequence belongs to the ABC transporter superfamily. Molybdate importer (TC 3.A.1.8) family. The complex is composed of two ATP-binding proteins (ModC), two transmembrane proteins (ModB) and a solute-binding protein (ModA).

It localises to the cell inner membrane. It carries out the reaction molybdate(out) + ATP + H2O = molybdate(in) + ADP + phosphate + H(+). Its function is as follows. Part of the ABC transporter complex ModABC involved in molybdenum import. Responsible for energy coupling to the transport system. In Bordetella bronchiseptica (strain ATCC BAA-588 / NCTC 13252 / RB50) (Alcaligenes bronchisepticus), this protein is Molybdenum import ATP-binding protein ModC.